The sequence spans 41 residues: Augerpeptide-s11a (41 aa).

Post-translationally, contains 4 disulfide bonds. In terms of tissue distribution, expressed by the venom duct.

The protein resides in the secreted. In terms of biological role, does not elicit any observable symptomatology in C.elegans. This is Augerpeptide-s11a from Terebra subulata (Chocolate spotted auger).